We begin with the raw amino-acid sequence, 2183 residues long: Genome polyprotein (2183 aa).

A lipid anchor (N-myristoyl glycine; by host) is attached at Gly2. Residues 2–1493 (GAQVSTQKTG…HVSRAFICLQ (1492 aa)) are Cytoplasmic-facing. An amphipathic alpha-helix region spans residues 566–582 (FYQGPTEESVERAMGRV). Active-site for protease 2A activity residues include His870 and Asp888. Positions 905 and 907 each coordinate Zn(2+). The active-site For protease 2A activity is the Cys959. 2 residues coordinate Zn(2+): Cys965 and His967. Positions 1099 to 1171 (NNNWLKKFTE…EQSAPSQSDQ (73 aa)) are membrane-binding. An oligomerization region spans residues 1099 to 1237 (NNNWLKKFTE…SPGAGKSVAT (139 aa)). Positions 1120-1124 (AVKIQ) are RNA-binding. Residues 1203–1359 (EKKMSNYIQF…SMYSQNGKIN (157 aa)) enclose the SF3 helicase domain. Residues Cys1367, Cys1379, and Cys1384 each coordinate Zn(2+). The C4-type; degenerate zinc finger occupies 1367-1384 (CDEECCPVNFKKCCPLVC). The segment at 1411 to 1418 (EYNHRHSV) is RNA-binding. Positions 1422–1427 (LEALFQ) are oligomerization. Residues 1494–1509 (ALTTFVSVAGIIYIIY) lie within the membrane without spanning it. Residues 1510–2183 (KLFAGFQGAY…TLRRKWLDAF (674 aa)) are Cytoplasmic-facing. The residue at position 1519 (Tyr1519) is an O-(5'-phospho-RNA)-tyrosine. The Peptidase C3 domain maps to 1539–1717 (GPAFEFAVAM…FSASLLRHYF (179 aa)). Active-site for protease 3C activity residues include His1578, Glu1609, and Cys1685. The RdRp catalytic domain maps to 1948–2064 (GHLRAFDYSG…SYPLPIDASL (117 aa)). Residues Asp1954 and Asp2050 each contribute to the Mg(2+) site.

This sequence belongs to the picornaviruses polyprotein family. Interacts with capsid protein VP1 and capsid protein VP3 to form heterotrimeric protomers. In terms of assembly, interacts with capsid protein VP0, and capsid protein VP3 to form heterotrimeric protomers. Five protomers subsequently associate to form pentamers which serve as building blocks for the capsid. Interacts with capsid protein VP2, capsid protein VP3 and capsid protein VP4 following cleavage of capsid protein VP0. Interacts with host CXADR. As to quaternary structure, interacts with capsid protein VP1 and capsid protein VP3 in the mature capsid. Interacts with capsid protein VP0 and capsid protein VP1 to form heterotrimeric protomers. Five protomers subsequently associate to form pentamers which serve as building blocks for the capsid. Interacts with capsid protein VP4 in the mature capsid. Interacts with protein 2C; this interaction may be important for virion morphogenesis. In terms of assembly, interacts with capsid protein VP1 and capsid protein VP3. As to quaternary structure, homodimer. Homohexamer; forms a hexameric ring structure with 6-fold symmetry characteristic of AAA+ ATPases. Interacts (via N-terminus) with host RTN3 (via reticulon domain); this interaction is important for viral replication. Interacts with capsid protein VP3; this interaction may be important for virion morphogenesis. In terms of assembly, interacts with protein 3CD. As to quaternary structure, homodimer. Interacts with host GBF1. Interacts (via GOLD domain) with host ACBD3 (via GOLD domain); this interaction allows the formation of a viral protein 3A/ACBD3 heterotetramer with a 2:2 stoichiometry, which will stimulate the recruitment of host PI4KB in order to synthesize PI4P at the viral RNA replication sites. Interacts with RNA-directed RNA polymerase. In terms of assembly, interacts with protein 3AB and with RNA-directed RNA polymerase. As to quaternary structure, interacts with Viral protein genome-linked and with protein 3CD. The cofactor is Mg(2+). Specific enzymatic cleavages in vivo by the viral proteases yield processing intermediates and the mature proteins. In terms of processing, myristoylation is required for the formation of pentamers during virus assembly. Further assembly of 12 pentamers and a molecule of genomic RNA generates the provirion. Post-translationally, during virion maturation, immature virions are rendered infectious following cleavage of VP0 into VP4 and VP2. This maturation seems to be an autocatalytic event triggered by the presence of RNA in the capsid and it is followed by a conformational change infectious virion. Myristoylation is required during RNA encapsidation and formation of the mature virus particle. In terms of processing, VPg is uridylylated by the polymerase into VPg-pUpU. This acts as a nucleotide-peptide primer for the genomic RNA replication.

The protein resides in the virion. It is found in the host cytoplasm. It localises to the host cytoplasmic vesicle membrane. Its subcellular location is the host nucleus. The catalysed reaction is a ribonucleoside 5'-triphosphate + H2O = a ribonucleoside 5'-diphosphate + phosphate + H(+). It catalyses the reaction Selective cleavage of Tyr-|-Gly bond in the picornavirus polyprotein.. It carries out the reaction RNA(n) + a ribonucleoside 5'-triphosphate = RNA(n+1) + diphosphate. The enzyme catalyses Selective cleavage of Gln-|-Gly bond in the poliovirus polyprotein. In other picornavirus reactions Glu may be substituted for Gln, and Ser or Thr for Gly.. Its activity is regulated as follows. Replication or transcription is subject to high level of random mutations by the nucleotide analog ribavirin. Its function is as follows. Forms an icosahedral capsid of pseudo T=3 symmetry with capsid proteins VP2 and VP3. The capsid is 300 Angstroms in diameter, composed of 60 copies of each capsid protein and enclosing the viral positive strand RNA genome. Capsid protein VP1 mainly forms the vertices of the capsid. Capsid protein VP1 interacts with host CXADR to provide virion attachment to target host cells. This attachment induces virion internalization. Tyrosine kinases are probably involved in the entry process. After binding to its receptor, the capsid undergoes conformational changes. Capsid protein VP1 N-terminus (that contains an amphipathic alpha-helix) and capsid protein VP4 are externalized. Together, they shape a pore in the host membrane through which viral genome is translocated to host cell cytoplasm. In terms of biological role, forms an icosahedral capsid of pseudo T=3 symmetry with capsid proteins VP2 and VP3. The capsid is 300 Angstroms in diameter, composed of 60 copies of each capsid protein and enclosing the viral positive strand RNA genome. Lies on the inner surface of the capsid shell. After binding to the host receptor, the capsid undergoes conformational changes. Capsid protein VP4 is released, Capsid protein VP1 N-terminus is externalized, and together, they shape a pore in the host membrane through which the viral genome is translocated into the host cell cytoplasm. Functionally, component of immature procapsids, which is cleaved into capsid proteins VP4 and VP2 after maturation. Allows the capsid to remain inactive before the maturation step. Its function is as follows. Cysteine protease that cleaves viral polyprotein and specific host proteins. It is responsible for the autocatalytic cleavage between the P1 and P2 regions, which is the first cleavage occurring in the polyprotein. Also cleaves the host translation initiation factor EIF4G1, in order to shut down the capped cellular mRNA translation. Inhibits the host nucleus-cytoplasm protein and RNA trafficking by cleaving host members of the nuclear pores. Counteracts stress granule formation probably by antagonizing its assembly or promoting its dissassembly. Cleaves and inhibits host IFIH1/MDA5, thereby inhibiting the type-I IFN production and the establishment of the antiviral state. Cleaves and inhibits host MAVS, thereby inhibiting the type-I IFN production and the establishment of the antiviral state. In terms of biological role, plays an essential role in the virus replication cycle by acting as a viroporin. Creates a pore in the host endoplasmic reticulum and as a consequence releases Ca2+ in the cytoplasm of infected cell. In turn, high levels of cytoplasmic calcium may trigger membrane trafficking and transport of viral ER-associated proteins to viroplasms, sites of viral genome replication. Induces and associates with structural rearrangements of intracellular membranes. Displays RNA-binding, nucleotide binding and NTPase activities. May play a role in virion morphogenesis and viral RNA encapsidation by interacting with the capsid protein VP3. Functionally, localizes the viral replication complex to the surface of membranous vesicles. Together with protein 3CD binds the Cis-Active RNA Element (CRE) which is involved in RNA synthesis initiation. Acts as a cofactor to stimulate the activity of 3D polymerase, maybe through a nucleid acid chaperone activity. Its function is as follows. Localizes the viral replication complex to the surface of membranous vesicles. It inhibits host cell endoplasmic reticulum-to-Golgi apparatus transport and causes the disassembly of the Golgi complex, possibly through GBF1 interaction. This would result in depletion of MHC, trail receptors and IFN receptors at the host cell surface. Plays an essential role in viral RNA replication by recruiting ACBD3 and PI4KB at the viral replication sites, thereby allowing the formation of the rearranged membranous structures where viral replication takes place. In terms of biological role, acts as a primer for viral RNA replication and remains covalently bound to viral genomic RNA. VPg is uridylylated prior to priming replication into VPg-pUpU. The oriI viral genomic sequence may act as a template for this. The VPg-pUpU is then used as primer on the genomic RNA poly(A) by the RNA-dependent RNA polymerase to replicate the viral genome. During genome replication, the VPg-RNA linkage is removed by the host TDP2, thereby accelerating replication. During the late stage of the replication cycle, host TDP2 is excluded from sites of viral RNA synthesis and encapsidation, allowing for the generation of progeny virions. Involved in the viral replication complex and viral polypeptide maturation. It exhibits protease activity with a specificity and catalytic efficiency that is different from protease 3C. Protein 3CD lacks polymerase activity. Protein 3CD binds to the 5'UTR of the viral genome. Functionally, replicates the viral genomic RNA on the surface of intracellular membranes. May form linear arrays of subunits that propagate along a strong head-to-tail interaction called interface-I. Covalently attaches UMP to a tyrosine of VPg, which is used to prime RNA synthesis. The positive stranded RNA genome is first replicated at virus induced membranous vesicles, creating a dsRNA genomic replication form. This dsRNA is then used as template to synthesize positive stranded RNA genomes. ss(+)RNA genomes are either translated, replicated or encapsidated. Its function is as follows. Major viral protease that mediates proteolytic processing of the polyprotein. Cleaves host EIF5B, contributing to host translation shutoff. Also cleaves host PABPC1, contributing to host translation shutoff. Cleaves host NLRP1, triggers host N-glycine-mediated degradation of the autoinhibitory NLRP1 N-terminal fragment. The sequence is that of Genome polyprotein from Coxsackievirus B4 (strain E2).